Reading from the N-terminus, the 460-residue chain is Elongation factor 1-alpha (460 aa).

G2 is modified (n,N,N-trimethylglycine). Residue K3 is modified to N6,N6-dimethyllysine; alternate. N6-methyllysine; alternate is present on K3. The 236-residue stretch at 5–240 (KTHVNLVVIG…DAIEPPVRPS (236 aa)) folds into the tr-type G domain. The interval 14–21 (GHVDAGKS) is G1. 14–21 (GHVDAGKS) contacts GTP. N6-methyllysine is present on K30. Positions 70 to 74 (GITID) are G2. K79 is modified (N6,N6,N6-trimethyllysine). A G3 region spans residues 91 to 94 (DAPG). Residues 91 to 95 (DAPGH) and 153 to 156 (NKMD) contribute to the GTP site. The interval 153 to 156 (NKMD) is G4. The tract at residues 192–194 (SGW) is G5. K317 carries the N6,N6-dimethyllysine; alternate modification. K317 carries the N6-methyllysine; alternate modification. K391 carries the N6-methyllysine modification.

Belongs to the TRAFAC class translation factor GTPase superfamily. Classic translation factor GTPase family. EF-Tu/EF-1A subfamily.

The protein localises to the cytoplasm. In terms of biological role, this protein promotes the GTP-dependent binding of aminoacyl-tRNA to the A-site of ribosomes during protein biosynthesis. This chain is Elongation factor 1-alpha (TEF), found in Yarrowia lipolytica (strain CLIB 122 / E 150) (Yeast).